The primary structure comprises 147 residues: SsrA-binding protein (147 aa).

This sequence belongs to the SmpB family.

The protein resides in the cytoplasm. Functionally, required for rescue of stalled ribosomes mediated by trans-translation. Binds to transfer-messenger RNA (tmRNA), required for stable association of tmRNA with ribosomes. tmRNA and SmpB together mimic tRNA shape, replacing the anticodon stem-loop with SmpB. tmRNA is encoded by the ssrA gene; the 2 termini fold to resemble tRNA(Ala) and it encodes a 'tag peptide', a short internal open reading frame. During trans-translation Ala-aminoacylated tmRNA acts like a tRNA, entering the A-site of stalled ribosomes, displacing the stalled mRNA. The ribosome then switches to translate the ORF on the tmRNA; the nascent peptide is terminated with the 'tag peptide' encoded by the tmRNA and targeted for degradation. The ribosome is freed to recommence translation, which seems to be the essential function of trans-translation. The polypeptide is SsrA-binding protein (Mycoplasmopsis agalactiae (strain NCTC 10123 / CIP 59.7 / PG2) (Mycoplasma agalactiae)).